The sequence spans 157 residues: Protein Smg (157 aa).

The protein belongs to the Smg family.

The sequence is that of Protein Smg from Shigella boydii serotype 4 (strain Sb227).